A 157-amino-acid chain; its full sequence is Cyclic pyranopterin monophosphate synthase (157 aa).

Substrate-binding positions include 73-75 (LCH) and 110-111 (ME). Residue Asp-125 is part of the active site.

This sequence belongs to the MoaC family. In terms of assembly, homohexamer; trimer of dimers.

The catalysed reaction is (8S)-3',8-cyclo-7,8-dihydroguanosine 5'-triphosphate = cyclic pyranopterin phosphate + diphosphate. It participates in cofactor biosynthesis; molybdopterin biosynthesis. Catalyzes the conversion of (8S)-3',8-cyclo-7,8-dihydroguanosine 5'-triphosphate to cyclic pyranopterin monophosphate (cPMP). This is Cyclic pyranopterin monophosphate synthase from Pseudomonas fluorescens (strain SBW25).